A 330-amino-acid chain; its full sequence is MTVRFGLLGAGRIGKVHAKAVSGNADARLVAVADAFPAAAEAIAGAYGCEVRTIDAIEAAADIDAVVICTPTDTHADLIERFARAGKAIFCEKPIDLDAERVRACLKVVSDTKAKLMVGFNRRFDPHFMAVRKAIDDGRIGEVEMVTITSRDPSAPPVDYIKRSGGIFRDMTIHDFDMARFLLGEEPVSVTATAAVLIDKAIGDAGDYDSVSVILQTASGKQAIISNSRRATYGYDQRIEVHGSKGAVAAENQRPVSIEIATGDGYTRPPLHDFFMTRYTEAYANEIESFIAAIEKGAEIAPSGNDGLAALALADAAVRSVAEKRQISIA.

This sequence belongs to the Gfo/Idh/MocA family.

It carries out the reaction myo-inositol + NAD(+) = scyllo-inosose + NADH + H(+). Its pathway is polyol metabolism; myo-inositol degradation into acetyl-CoA; acetyl-CoA from myo-inositol: step 1/7. Involved in the oxidation of myo-inositol (MI) to 2-keto-myo-inositol (2KMI or 2-inosose). This chain is Inositol 2-dehydrogenase (idhA), found in Rhizobium meliloti (strain 1021) (Ensifer meliloti).